A 356-amino-acid polypeptide reads, in one-letter code: Red-sensitive opsin-2 (356 aa).

The Extracellular segment spans residues 1 to 48 (MAEWANAAFAARRRGDETTRDNAFSYTNSNNTRDPFEGPNYHIAPRWV). N-linked (GlcNAc...) asparagine glycosylation is present at asparagine 30. The helical transmembrane segment at 49-73 (YNVATVWMFFVVVASTFTNGLVLVA) threads the bilayer. Over 74–85 (TAKFKKLRHPLN) the chain is Cytoplasmic. The chain crosses the membrane as a helical span at residues 86-111 (WILVNLAIADLGETLFASTISVINQV). Topologically, residues 112-125 (FGYFILGHPMCIFE) are extracellular. The cysteines at positions 122 and 199 are disulfide-linked. The helical transmembrane segment at 126–145 (GYTVSVCGIAGLWSLTVISW) threads the bilayer. The Cytoplasmic portion of the chain corresponds to 146–164 (ERWVVVCKPFGNVKFDGKW). A helical membrane pass occupies residues 165–188 (ASAGIIFSWVWAAVWCAPPIFGWS). Residues 189–214 (RYWPHGLKTSCGPDVFGGNEDPGVQS) lie on the Extracellular side of the membrane. The chain crosses the membrane as a helical span at residues 215 to 242 (YMLVLMITCCILPLAIIILCYIAVFLAI). The Cytoplasmic portion of the chain corresponds to 243–264 (HAVAQQQKDSESTQKAEKEVSR). A helical transmembrane segment spans residues 265–288 (MVVVMILAFCLCWGPYTAFACFAA). The Extracellular portion of the chain corresponds to 289 to 296 (ANPGYAFH). The helical transmembrane segment at 297-321 (PLAAAMPAYFAKSATIYNPIIYVFM) threads the bilayer. Lysine 308 is modified (N6-(retinylidene)lysine). The Cytoplasmic portion of the chain corresponds to 322-356 (NRQFRVCIMQLFGKKVDDGSEVSTSKTEVSSVAPA).

This sequence belongs to the G-protein coupled receptor 1 family. Opsin subfamily. Phosphorylated on some or all of the serine and threonine residues present in the C-terminal region.

The protein resides in the membrane. In terms of biological role, visual pigments are the light-absorbing molecules that mediate vision. They consist of an apoprotein, opsin, covalently linked to cis-retinal. The sequence is that of Red-sensitive opsin-2 (opn1lw2) from Danio rerio (Zebrafish).